Reading from the N-terminus, the 162-residue chain is Globin CTT-VI (162 aa).

Residues 1 to 15 (MKFLVLALCIAAASA) form the signal peptide. Residues 17-161 (VLTTEQADLV…TYAMLFSAMD (145 aa)) enclose the Globin domain. Heme b-binding residues include histidine 75 and histidine 110.

It belongs to the globin family. Homodimer.

The polypeptide is Globin CTT-VI (CTT-6) (Chironomus thummi thummi (Midge)).